A 397-amino-acid chain; its full sequence is Enoyl-[acyl-carrier-protein] reductase [NADH] (397 aa).

Residues Gly48–Tyr53, Phe74–Glu75, Asp111–Ala112, and Val139–Ala140 contribute to the NAD(+) site. Tyr225 serves as a coordination point for substrate. Tyr235 (proton donor) is an active-site residue. Residues Lys244 and Val273–Thr275 each bind NAD(+).

Belongs to the TER reductase family. In terms of assembly, monomer.

The catalysed reaction is a 2,3-saturated acyl-[ACP] + NAD(+) = a (2E)-enoyl-[ACP] + NADH + H(+). It functions in the pathway lipid metabolism; fatty acid biosynthesis. Its function is as follows. Involved in the final reduction of the elongation cycle of fatty acid synthesis (FAS II). Catalyzes the reduction of a carbon-carbon double bond in an enoyl moiety that is covalently linked to an acyl carrier protein (ACP). The sequence is that of Enoyl-[acyl-carrier-protein] reductase [NADH] from Burkholderia pseudomallei (strain 1106a).